We begin with the raw amino-acid sequence, 267 residues long: Probable proteasome subunit beta type-2 (267 aa).

The propeptide at 1–35 (MMGINERKGFDFEYYQRNLLLQEKGFPTPKATSTG) is removed in mature form. Thr-36 functions as the Nucleophile in the catalytic mechanism.

The protein belongs to the peptidase T1B family. In terms of assembly, the 26S proteasome consists of a 20S proteasome core and two 19S regulatory subunits. The 20S proteasome core is composed of 28 subunits that are arranged in four stacked rings, resulting in a barrel-shaped structure. The two end rings are each formed by seven alpha subunits, and the two central rings are each formed by seven beta subunits. The catalytic chamber with the active sites is on the inside of the barrel.

The protein resides in the cytoplasm. It is found in the nucleus. It catalyses the reaction Cleavage of peptide bonds with very broad specificity.. The proteasome is a multicatalytic proteinase complex which is characterized by its ability to cleave peptides with Arg, Phe, Tyr, Leu, and Glu adjacent to the leaving group at neutral or slightly basic pH. The proteasome has an ATP-dependent proteolytic activity (Potential). This Schizosaccharomyces pombe (strain 972 / ATCC 24843) (Fission yeast) protein is Probable proteasome subunit beta type-2 (pup1).